Consider the following 227-residue polypeptide: Sperm-associated antigen 7 (227 aa).

Residues 1–45 form a disordered region; the sequence is MADLLGSILSSMEKPPSLGDQESRRKAREQAARLKKLQEQDKQQK. Alanine 2 is subject to N-acetylalanine. The span at 21-45 shows a compositional bias: basic and acidic residues; that stretch reads QESRRKAREQAARLKKLQEQDKQQK. The Nuclear localization signal signature appears at 35-51; it reads KKLQEQDKQQKVEFRKR. The R3H domain occupies 46–109; sequence VEFRKRMEKE…DCRYVMIFKK (64 aa). A Phosphoserine modification is found at serine 114. Residues 118-161 form a disordered region; it reads LDSYRHGEEWDPQKAEEKRKLKELAQKQEEEAAQQGPAVVSPAS. Residues 119 to 147 show a composition bias toward basic and acidic residues; the sequence is DSYRHGEEWDPQKAEEKRKLKELAQKQEE. The short motif at 122-139 is the Nuclear localization signal element; it reads RHGEEWDPQKAEEKRKLK. Residues serine 158 and serine 202 each carry the phosphoserine modification.

The protein resides in the nucleus. The polypeptide is Sperm-associated antigen 7 (Spag7) (Mus musculus (Mouse)).